We begin with the raw amino-acid sequence, 549 residues long: Glucose-6-phosphate isomerase (549 aa).

The Proton donor role is filled by Glu-353. Residues His-384 and Lys-510 contribute to the active site.

This sequence belongs to the GPI family.

It localises to the cytoplasm. The enzyme catalyses alpha-D-glucose 6-phosphate = beta-D-fructose 6-phosphate. It functions in the pathway carbohydrate biosynthesis; gluconeogenesis. The protein operates within carbohydrate degradation; glycolysis; D-glyceraldehyde 3-phosphate and glycerone phosphate from D-glucose: step 2/4. Its function is as follows. Catalyzes the reversible isomerization of glucose-6-phosphate to fructose-6-phosphate. This is Glucose-6-phosphate isomerase from Mycolicibacterium smegmatis (strain ATCC 700084 / mc(2)155) (Mycobacterium smegmatis).